Consider the following 352-residue polypeptide: Fructose-1,6-bisphosphatase class 1 (352 aa).

Positions 111, 133, 135, and 136 each coordinate Mg(2+). Substrate-binding positions include 136-139 (DGSS), N228, Y256, and K286. E292 is a Mg(2+) binding site.

The protein belongs to the FBPase class 1 family. In terms of assembly, homotetramer. Mg(2+) is required as a cofactor.

The protein localises to the cytoplasm. The catalysed reaction is beta-D-fructose 1,6-bisphosphate + H2O = beta-D-fructose 6-phosphate + phosphate. Its pathway is carbohydrate biosynthesis; Calvin cycle. The chain is Fructose-1,6-bisphosphatase class 1 from Crocosphaera subtropica (strain ATCC 51142 / BH68) (Cyanothece sp. (strain ATCC 51142)).